The sequence spans 356 residues: uncharacterized protein (356 aa).

Transmembrane regions (helical) follow at residues 7–29 (LLSR…VSLY), 49–71 (YFLN…ISLI), 91–113 (ISPL…TFLL), 270–292 (LFYR…YLFF), 299–316 (QVIP…LVIL), and 329–348 (VLYS…KGVY).

The protein localises to the cell membrane. This is an uncharacterized protein from Aquifex aeolicus (strain VF5).